The chain runs to 213 residues: Histone H1 (213 aa).

Residues 1-25 (MAAATASAAATPAKKAAPKKPAAAP) show a composition bias toward low complexity. Disordered regions lie at residues 1-30 (MAAATASAAATPAKKAAPKKPAAAPEHPSY) and 81-213 (GEFV…AKSS). An H15 domain is found at 26–97 (EHPSYKEMLT…GPSGTVKLAK (72 aa)). 4 stretches are compositionally biased toward low complexity: residues 102–113 (AAAPKKPAAKKA), 123–137 (KKAAAPKKAAAPKSA), 157–176 (KKAAAPKKVAAPVEKPAPVK), and 203–213 (PKKAATPAKSS).

This sequence belongs to the histone H1/H5 family.

Its subcellular location is the nucleus. It localises to the chromosome. Functionally, could act as an H1-type linker histone. The protein is Histone H1 of Ascobolus immersus.